Consider the following 171-residue polypeptide: tRNA-splicing endonuclease subunit Sen15 (171 aa).

Positions 1-35 are disordered; sequence MEERGDSEPTPGCSGLGPGGVRGFGDGGGAPSWAP. Residue S7 is modified to Phosphoserine. Positions 14–30 are enriched in gly residues; it reads SGLGPGGVRGFGDGGGA. S168 is subject to Phosphoserine.

It belongs to the SEN15 family. Homodimer. tRNA splicing endonuclease is a heterotetramer composed of TSEN2, TSEN15, TSEN34/LENG5 and TSEN54. tRNA splicing endonuclease complex also contains proteins of the Pre-mRNA 3' end processing machinery, such as CLP1, CPSF1, CPSF4 and CSTF2. As to expression, widely expressed. Highly expressed in testis and uterus.

It localises to the nucleus. Its subcellular location is the nucleolus. Its function is as follows. Non-catalytic subunit of the tRNA-splicing endonuclease complex, a complex responsible for identification and cleavage of the splice sites in pre-tRNA. It cleaves pre-tRNA at the 5' and 3' splice sites to release the intron. The products are an intron and two tRNA half-molecules bearing 2',3' cyclic phosphate and 5'-OH termini. There are no conserved sequences at the splice sites, but the intron is invariably located at the same site in the gene, placing the splice sites an invariant distance from the constant structural features of the tRNA body. The tRNA splicing endonuclease is also involved in mRNA processing via its association with pre-mRNA 3'-end processing factors, establishing a link between pre-tRNA splicing and pre-mRNA 3'-end formation, suggesting that the endonuclease subunits function in multiple RNA-processing events. This chain is tRNA-splicing endonuclease subunit Sen15 (TSEN15), found in Homo sapiens (Human).